The following is a 798-amino-acid chain: Capsid assembly protein UL37 homolog (798 aa).

It belongs to the herpesviridae HHV-1 UL37 family.

The protein resides in the virion tegument. This Homo sapiens (Human) protein is Capsid assembly protein UL37 homolog (U30).